Consider the following 637-residue polypeptide: MSHQETHGFQTEVKQLLHLMIHSLYSNKEIFLRELVSNAADAADKLRYLALTNDSLYEGDGELRVRVSADKDKGTVTIEDNGIGMTRDGVIEHLGTIAKSGTAEFFKNLSGDSAKDSQLIGQFGVGFYSAFIVAKRVEVFTRAAGHSADEGVKWESEGEGNFSVETITKAERGTKIVLHLRDEEKEFADDWRLRSIITKYSDHISIPVEMYQEGTPERDGPDGEKIPATEGQWKAMNKATALWTRSKSDVSDEEYKEFYKHISHDFADPLDWSHNKVEGNQEYTSLLYIPAKAPWDLWNRDRKHGLKLFVQRVFIMDDAEQFMPSYLRFVQGLIDSNDLPLNVSREILQDNKVTRNLRQALTKRVLSMLEKLAKDDADKYQQFWAEFGTVLKEGPAEDFANRERIAGLLRFASTHTGDATPSVSLDDYIGRMKEGQEKIYYIVADSHEAAANSPHLELLKKKGIEVLLLSERIDEWLINHLHDYKEKALHSVTRGDLDLGALEDEAEKAAQEKLAQESEPLVERFKSALGDKVSDVKITTRLTDTPACVVTGEGEMSSQMIKLMQAAGQPVPESKPTLELNPTHPLVARLDKEQDETAFAEWAEMLLAQATLSERGSLADPSAFIKLVNQMLLKSVG.

Positions methionine 1–arginine 345 are a; substrate-binding. The tract at residues glutamate 346–lysine 562 is b. The tract at residues leucine 563–glycine 637 is c.

Belongs to the heat shock protein 90 family. As to quaternary structure, homodimer.

The protein localises to the cytoplasm. Its function is as follows. Molecular chaperone. Has ATPase activity. The protein is Chaperone protein HtpG of Shewanella amazonensis (strain ATCC BAA-1098 / SB2B).